A 503-amino-acid polypeptide reads, in one-letter code: Cobyric acid synthase (503 aa).

Residues 255–444 form the GATase cobBQ-type domain; the sequence is AIDVAVIRCP…MHDLFHNDAF (190 aa). The active-site Nucleophile is the Cys-337. The active site involves His-436.

Belongs to the CobB/CobQ family. CobQ subfamily.

Its pathway is cofactor biosynthesis; adenosylcobalamin biosynthesis. In terms of biological role, catalyzes amidations at positions B, D, E, and G on adenosylcobyrinic A,C-diamide. NH(2) groups are provided by glutamine, and one molecule of ATP is hydrogenolyzed for each amidation. This Geobacillus kaustophilus (strain HTA426) protein is Cobyric acid synthase.